We begin with the raw amino-acid sequence, 447 residues long: GTPase Der (447 aa).

2 EngA-type G domains span residues 4–165 and 180–357; these read KIIT…PEEE and LQIV…KIWN. GTP contacts are provided by residues 10–17, 57–61, 119–122, 186–193, 233–237, and 298–301; these read GRPNVGKS, DTPGL, NKCE, GRPNAGKS, DTAGL, and NKWD. The region spanning 358-443 is the KH-like domain; it reads KKITTSKLNE…PIRFTYVKTK (86 aa).

The protein belongs to the TRAFAC class TrmE-Era-EngA-EngB-Septin-like GTPase superfamily. EngA (Der) GTPase family. Associates with the 50S ribosomal subunit.

Its function is as follows. GTPase that plays an essential role in the late steps of ribosome biogenesis. This is GTPase Der from Rickettsia felis (strain ATCC VR-1525 / URRWXCal2) (Rickettsia azadi).